A 20-amino-acid chain; its full sequence is Short cationic peptide-4b (20 aa).

Glutamic acid 1-amide is present on E20.

Expressed by the venom gland.

Its subcellular location is the secreted. In Cupiennius salei (American wandering spider), this protein is Short cationic peptide-4b.